The following is a 225-amino-acid chain: MSPRLRLQPEAVGIGMTSQRVRDRLVDRLREAGIVDESTLNAIRVVPRHLFIDEALASRAYEDTALPIGHGQTISQPWVVARMTEAVLQVAPKRVLEVGTGSGYQAAVLGALGLEVYTVERIGDLLRQARKRFRALGMNIRTKHDDGRVGWAEHGPFDAIVVTAAAPALVDVLIEQLAEGGRLVAPVGGPSAQSLVQLDRRADGSIEQHVLAPVTFVPLLSGMLD.

Residue Ser-75 is part of the active site.

It belongs to the methyltransferase superfamily. L-isoaspartyl/D-aspartyl protein methyltransferase family.

It localises to the cytoplasm. It carries out the reaction [protein]-L-isoaspartate + S-adenosyl-L-methionine = [protein]-L-isoaspartate alpha-methyl ester + S-adenosyl-L-homocysteine. Catalyzes the methyl esterification of L-isoaspartyl residues in peptides and proteins that result from spontaneous decomposition of normal L-aspartyl and L-asparaginyl residues. It plays a role in the repair and/or degradation of damaged proteins. This Stenotrophomonas maltophilia (strain R551-3) protein is Protein-L-isoaspartate O-methyltransferase.